The sequence spans 218 residues: Large ribosomal subunit protein bL25 (218 aa).

Residues 187–218 (SATAAVEEAKEDGAPEESAQGQGAAEAQETNK) form a disordered region. Over residues 202 to 218 (EESAQGQGAAEAQETNK) the composition is skewed to low complexity.

The protein belongs to the bacterial ribosomal protein bL25 family. CTC subfamily. In terms of assembly, part of the 50S ribosomal subunit; part of the 5S rRNA/L5/L18/L25 subcomplex. Contacts the 5S rRNA. Binds to the 5S rRNA independently of L5 and L18.

Functionally, this is one of the proteins that binds to the 5S RNA in the ribosome where it forms part of the central protuberance. The protein is Large ribosomal subunit protein bL25 of Anaplasma marginale (strain St. Maries).